We begin with the raw amino-acid sequence, 297 residues long: Acetyl-coenzyme A carboxylase carboxyl transferase subunit beta (297 aa).

Residues leucine 25 to proline 294 form the CoA carboxyltransferase N-terminal domain.

This sequence belongs to the AccD/PCCB family. In terms of assembly, acetyl-CoA carboxylase is a heterohexamer composed of biotin carboxyl carrier protein (AccB), biotin carboxylase (AccC) and two subunits each of ACCase subunit alpha (AccA) and ACCase subunit beta (AccD).

The protein localises to the cytoplasm. The enzyme catalyses N(6)-carboxybiotinyl-L-lysyl-[protein] + acetyl-CoA = N(6)-biotinyl-L-lysyl-[protein] + malonyl-CoA. It participates in lipid metabolism; malonyl-CoA biosynthesis; malonyl-CoA from acetyl-CoA: step 1/1. Component of the acetyl coenzyme A carboxylase (ACC) complex. Biotin carboxylase (BC) catalyzes the carboxylation of biotin on its carrier protein (BCCP) and then the CO(2) group is transferred by the transcarboxylase to acetyl-CoA to form malonyl-CoA. The chain is Acetyl-coenzyme A carboxylase carboxyl transferase subunit beta from Xanthobacter autotrophicus (strain ATCC BAA-1158 / Py2).